The primary structure comprises 97 residues: Putative pterin-4-alpha-carbinolamine dehydratase (97 aa).

The protein belongs to the pterin-4-alpha-carbinolamine dehydratase family.

The catalysed reaction is (4aS,6R)-4a-hydroxy-L-erythro-5,6,7,8-tetrahydrobiopterin = (6R)-L-erythro-6,7-dihydrobiopterin + H2O. The sequence is that of Putative pterin-4-alpha-carbinolamine dehydratase from Phenylobacterium zucineum (strain HLK1).